The following is a 436-amino-acid chain: GTPase Der (436 aa).

2 EngA-type G domains span residues 4 to 167 (PTVA…PTEV) and 175 to 351 (IRFS…ESQN). Residues 10–17 (GRPNVGKS), 57–61 (DTGGI), 119–122 (NKVD), 181–188 (GRPNVGKS), 229–233 (DTAGM), and 294–297 (NKWD) contribute to the GTP site. In terms of domain architecture, KH-like spans 352–436 (RRISSAVLND…PIHLIARKRK (85 aa)).

The protein belongs to the TRAFAC class TrmE-Era-EngA-EngB-Septin-like GTPase superfamily. EngA (Der) GTPase family. As to quaternary structure, associates with the 50S ribosomal subunit.

GTPase that plays an essential role in the late steps of ribosome biogenesis. The protein is GTPase Der of Streptococcus thermophilus (strain CNRZ 1066).